A 561-amino-acid polypeptide reads, in one-letter code: Arginine--tRNA ligase (561 aa).

The short motif at 128 to 138 is the 'HIGH' region element; that stretch reads ANPTGPLHVGH.

Belongs to the class-I aminoacyl-tRNA synthetase family. As to quaternary structure, monomer.

It is found in the cytoplasm. The enzyme catalyses tRNA(Arg) + L-arginine + ATP = L-arginyl-tRNA(Arg) + AMP + diphosphate. This Methylibium petroleiphilum (strain ATCC BAA-1232 / LMG 22953 / PM1) protein is Arginine--tRNA ligase.